The chain runs to 196 residues: MVKIGVLALQGAVREHVRCLEAPGVEVSIVKKVEQLEDLDGLVFPGGESTTMRRLIDKYGFFEPLKAFAAQGKPVFGTCAGLILMATRIDGEDHGHLELMDMTVQRNAFGRQRESFETDLIVEGVGDDVRAVFIRAPLIQEVGQNVDVLSKFGDEIVVARQGHLLGCSFHPELTDDRRFHQYFVQMVKEAKTIAQS.

47 to 49 lines the L-glutamine pocket; sequence GES. Residue cysteine 79 is the Nucleophile of the active site. Residues arginine 106 and 134–135 contribute to the L-glutamine site; that span reads IR. Residues histidine 170 and glutamate 172 each act as charge relay system in the active site.

Belongs to the glutaminase PdxT/SNO family. In the presence of PdxS, forms a dodecamer of heterodimers. Only shows activity in the heterodimer.

It carries out the reaction aldehydo-D-ribose 5-phosphate + D-glyceraldehyde 3-phosphate + L-glutamine = pyridoxal 5'-phosphate + L-glutamate + phosphate + 3 H2O + H(+). The catalysed reaction is L-glutamine + H2O = L-glutamate + NH4(+). The protein operates within cofactor biosynthesis; pyridoxal 5'-phosphate biosynthesis. Its function is as follows. Catalyzes the hydrolysis of glutamine to glutamate and ammonia as part of the biosynthesis of pyridoxal 5'-phosphate. The resulting ammonia molecule is channeled to the active site of PdxS. The protein is Pyridoxal 5'-phosphate synthase subunit PdxT of Halalkalibacterium halodurans (strain ATCC BAA-125 / DSM 18197 / FERM 7344 / JCM 9153 / C-125) (Bacillus halodurans).